We begin with the raw amino-acid sequence, 385 residues long: Deoxyhypusine synthase (385 aa).

Residues 108-112 (SNLIS), 134-136 (TAG), E140, and D257 each bind NAD(+). Position 139 to 140 (139 to 140 (EE)) interacts with spermidine. D262 is a binding site for spermidine. NAD(+) is bound at residue G304. A spermidine-binding site is contributed by H309. 329 to 330 (TG) contributes to the NAD(+) binding site. Residues 335–337 (GSD) and 344–350 (EAVSWGK) contribute to the spermidine site. Residue K350 is the Nucleophile of the active site. 363–364 (DV) provides a ligand contact to NAD(+).

This sequence belongs to the deoxyhypusine synthase family. The cofactor is NAD(+).

It catalyses the reaction [eIF5A protein]-L-lysine + spermidine = [eIF5A protein]-deoxyhypusine + propane-1,3-diamine. It functions in the pathway protein modification; eIF5A hypusination. Functionally, catalyzes the NAD-dependent oxidative cleavage of spermidine and the subsequent transfer of the butylamine moiety of spermidine to the epsilon-amino group of a specific lysine residue of the eIF-5A precursor protein to form the intermediate deoxyhypusine residue. This chain is Deoxyhypusine synthase (DYS1), found in Candida glabrata (strain ATCC 2001 / BCRC 20586 / JCM 3761 / NBRC 0622 / NRRL Y-65 / CBS 138) (Yeast).